The chain runs to 944 residues: 2-oxoglutarate dehydrogenase E1 component (944 aa).

The interval 918 to 944 (SSTAEGDPTVHKKEQERIVSDSLTRKN) is disordered. Residues 925–936 (PTVHKKEQERIV) show a composition bias toward basic and acidic residues.

This sequence belongs to the alpha-ketoglutarate dehydrogenase family. As to quaternary structure, homodimer. Part of the 2-oxoglutarate dehydrogenase (OGDH) complex composed of E1 (2-oxoglutarate dehydrogenase), E2 (dihydrolipoamide succinyltransferase) and E3 (dihydrolipoamide dehydrogenase); the complex contains multiple copies of the three enzymatic components (E1, E2 and E3). The cofactor is thiamine diphosphate.

It carries out the reaction N(6)-[(R)-lipoyl]-L-lysyl-[protein] + 2-oxoglutarate + H(+) = N(6)-[(R)-S(8)-succinyldihydrolipoyl]-L-lysyl-[protein] + CO2. E1 component of the 2-oxoglutarate dehydrogenase (OGDH) complex which catalyzes the decarboxylation of 2-oxoglutarate, the first step in the conversion of 2-oxoglutarate to succinyl-CoA and CO(2). In Bacillus pumilus (strain SAFR-032), this protein is 2-oxoglutarate dehydrogenase E1 component.